Consider the following 387-residue polypeptide: MYRNQLARASLRSTSSINQIRNMITAQAVVYAQHGEPKDVLKTLKYEIDDDNLDSNSIIVKTLGSPVNPSDINQIQGVYPSKPEKTTELGSNEPVAVCGNEGLFEILKVGDNVSNFKVGDWCVPTSVNMGTWRTHMLCGGDEMTKIPNPEQSKANGKPSGLSVNQGATISVNPLTAYLMLTHYVKLTPGKDWFIQNGGNSAVGKYATQISNLLGINSISVIRDRPDLQDLIKNMTEECGATKVITEEQNASKEFGSEIKSWVKETGGEIKLALNCVGGKNSTGIARKLNNNGLMLTYGGMSMQPVILPTSLHIFKNITSSGFWVTQLLKNDVELKRKTLGQIIEWYENRQLKDAPSKETKFNPSDELSRYYIDGIVNSKGGKQLIVY.

The transit peptide at 1–23 (MYRNQLARASLRSTSSINQIRNM) directs the protein to the mitochondrion. The active-site Proton donor is Tyr79. Residues Asn172, 199 to 202 (NSAV), 222 to 224 (RDR), 297 to 300 (YGGM), 322 to 324 (FWV), and Lys382 each bind NADP(+).

The protein belongs to the zinc-containing alcohol dehydrogenase family. Quinone oxidoreductase subfamily. In terms of assembly, homodimer.

It is found in the mitochondrion matrix. It catalyses the reaction a 2,3-saturated acyl-[ACP] + NADP(+) = a (2E)-enoyl-[ACP] + NADPH + H(+). Catalyzes the NADPH-dependent reduction of trans-2-enoyl thioesters in mitochondrial fatty acid synthesis (fatty acid synthesis type II). Fatty acid chain elongation in mitochondria uses acyl carrier protein (ACP) as an acyl group carrier, but the enzyme accepts both ACP and CoA thioesters as substrates in vitro. Required for respiration and the maintenance of the mitochondrial compartment. This chain is Enoyl-[acyl-carrier-protein] reductase 2, mitochondrial (ETR2), found in Debaryomyces hansenii (strain ATCC 36239 / CBS 767 / BCRC 21394 / JCM 1990 / NBRC 0083 / IGC 2968) (Yeast).